Here is a 105-residue protein sequence, read N- to C-terminus: Antitoxin YfjZ (105 aa).

The protein belongs to the CbeA/YafW/YfjZ antitoxin family.

In terms of biological role, antitoxin component of a type IV toxin-antitoxin (TA) system. Antitoxin that counteracts the effect of cognate toxin YpjF. Also counteracts the effect of non-cognate toxins CbtA and YfkI. The sequence is that of Antitoxin YfjZ (yfjZ) from Escherichia coli (strain K12).